The following is a 183-amino-acid chain: NAD(P)H-quinone oxidoreductase subunit I, chloroplastic (183 aa).

2 consecutive 4Fe-4S ferredoxin-type domains span residues 55-84 (GRIH…VDWE) and 95-124 (KNYS…MTEE). [4Fe-4S] cluster is bound by residues cysteine 64, cysteine 67, cysteine 70, cysteine 74, cysteine 104, cysteine 107, cysteine 110, and cysteine 114.

The protein belongs to the complex I 23 kDa subunit family. In terms of assembly, NDH is composed of at least 16 different subunits, 5 of which are encoded in the nucleus. [4Fe-4S] cluster serves as cofactor.

Its subcellular location is the plastid. The protein resides in the chloroplast thylakoid membrane. The enzyme catalyses a plastoquinone + NADH + (n+1) H(+)(in) = a plastoquinol + NAD(+) + n H(+)(out). The catalysed reaction is a plastoquinone + NADPH + (n+1) H(+)(in) = a plastoquinol + NADP(+) + n H(+)(out). In terms of biological role, NDH shuttles electrons from NAD(P)H:plastoquinone, via FMN and iron-sulfur (Fe-S) centers, to quinones in the photosynthetic chain and possibly in a chloroplast respiratory chain. The immediate electron acceptor for the enzyme in this species is believed to be plastoquinone. Couples the redox reaction to proton translocation, and thus conserves the redox energy in a proton gradient. This chain is NAD(P)H-quinone oxidoreductase subunit I, chloroplastic, found in Marchantia polymorpha (Common liverwort).